We begin with the raw amino-acid sequence, 109 residues long: Oncomodulin (109 aa).

Ser2 bears the N-acetylserine mark. 2 EF-hand domains span residues Met39–Asp74 and Leu78–Ser109. Ca(2+) contacts are provided by Asp52, Asp54, Ser56, Tyr58, Glu63, Asp91, Asp93, Asp95, Lys97, and Glu102. The segment at Glu82 to Ser109 is disordered. Residues Gly94 to Ser109 show a composition bias toward basic and acidic residues.

This sequence belongs to the parvalbumin family. In terms of tissue distribution, found in tumor tissues and not detected in normal tissues.

Functionally, has some calmodulin-like activity with respect to enzyme activation and growth regulation. Binds two calcium ions. The protein is Oncomodulin (Ocm) of Mus musculus (Mouse).